Here is a 377-residue protein sequence, read N- to C-terminus: Probable purine permease 22 (377 aa).

Helical transmembrane passes span tryptophan 39–leucine 59, threonine 71–phenylalanine 91, serine 107–tyrosine 127, alanine 128–alanine 148, phenylalanine 166–valine 186, valine 202–isoleucine 222, valine 238–phenylalanine 258, threonine 283–phenylalanine 303, phenylalanine 309–phenylalanine 329, and isoleucine 338–aspartate 358.

It belongs to the purine permeases (TC 2.A.7.14) family.

It is found in the membrane. This chain is Probable purine permease 22 (PUP22), found in Arabidopsis thaliana (Mouse-ear cress).